The sequence spans 1053 residues: Protein CLEC16A (1053 aa).

Positions Ile51–Tyr198 constitute an FPL domain. Disordered stretches follow at residues Ser375–Glu434, Ser452–Cys471, and Ser892–Leu983. Residues His381–Asn392 are compositionally biased toward basic residues. The span at Ser892–Pro938 shows a compositional bias: low complexity.

This sequence belongs to the CLEC16A/gop-1 family. In terms of assembly, interacts with RNF41/NRDP1. In terms of tissue distribution, almost exclusively expressed in immune cells, including dendritic cells, B-lymphocytes and natural killer cells.

It localises to the endosome membrane. The protein localises to the lysosome membrane. In terms of biological role, regulator of mitophagy through the upstream regulation of the RNF41/NRDP1-PRKN pathway. Mitophagy is a selective form of autophagy necessary for mitochondrial quality control. The RNF41/NRDP1-PRKN pathway regulates autophagosome-lysosome fusion during late mitophagy. May protect RNF41/NRDP1 from proteasomal degradation, RNF41/NRDP1 which regulates proteasomal degradation of PRKN. Plays a key role in beta cells functions by regulating mitophagy/autophagy and mitochondrial health. The protein is Protein CLEC16A of Homo sapiens (Human).